The primary structure comprises 196 residues: Deoxyribose-phosphate aldolase (196 aa).

Aspartate 91 functions as the Proton donor/acceptor in the catalytic mechanism. The active-site Schiff-base intermediate with acetaldehyde is lysine 153. Catalysis depends on lysine 182, which acts as the Proton donor/acceptor.

It belongs to the DeoC/FbaB aldolase family. DeoC type 1 subfamily.

It localises to the cytoplasm. The catalysed reaction is 2-deoxy-D-ribose 5-phosphate = D-glyceraldehyde 3-phosphate + acetaldehyde. Its pathway is carbohydrate degradation; 2-deoxy-D-ribose 1-phosphate degradation; D-glyceraldehyde 3-phosphate and acetaldehyde from 2-deoxy-alpha-D-ribose 1-phosphate: step 2/2. In terms of biological role, catalyzes a reversible aldol reaction between acetaldehyde and D-glyceraldehyde 3-phosphate to generate 2-deoxy-D-ribose 5-phosphate. The sequence is that of Deoxyribose-phosphate aldolase from Mycoplasma mycoides subsp. mycoides SC (strain CCUG 32753 / NCTC 10114 / PG1).